The sequence spans 202 residues: Superoxide dismutase [Mn/Fe] (202 aa).

H26, H80, D163, and H167 together coordinate Fe(3+). Mn(2+) is bound by residues H26, H80, D163, and H167.

This sequence belongs to the iron/manganese superoxide dismutase family. As to quaternary structure, homodimer. Requires Mn(2+) as cofactor. Fe(3+) serves as cofactor.

The enzyme catalyses 2 superoxide + 2 H(+) = H2O2 + O2. Functionally, destroys superoxide anion radicals which are normally produced within the cells and which are toxic to biological systems. Catalyzes the dismutation of superoxide anion radicals into O2 and H2O2 by successive reduction and oxidation of the transition metal ion at the active site. The polypeptide is Superoxide dismutase [Mn/Fe] (sodB) (Methylomonas sp. (strain J)).